Here is a 459-residue protein sequence, read N- to C-terminus: Putative metabolite transport protein YdjK (459 aa).

The Cytoplasmic portion of the chain corresponds to 1-25 (MEQITKPHCGARLDRLPDCRWHSSM). Residues 26-46 (FAIVAFGLLVCWSNAVGGLIL) form a helical membrane-spanning segment. Over 47-60 (AQLKALGWTDNSTT) the chain is Periplasmic. The chain crosses the membrane as a helical span at residues 61-81 (ATFSAITTAGMFLGALVGGII). The Cytoplasmic portion of the chain corresponds to 82 to 90 (GDKTGRRNA). A helical transmembrane segment spans residues 91 to 111 (FILYEAIHIASMVVGAFSPNM). Asp112 is a topological domain (periplasmic). A helical transmembrane segment spans residues 113–133 (FLIACRFVMGVGLGALLVTLF). The Cytoplasmic portion of the chain corresponds to 134 to 153 (AGFTEYMPGRNRGTWSSRVS). Residues 154–174 (FIGNWSYPLCSLIAMGLTPLI) form a helical membrane-spanning segment. Residues 175 to 181 (SAEWNWR) lie on the Periplasmic side of the membrane. A helical membrane pass occupies residues 182–202 (VQLLIPAILSLIATALAWRYF). Topologically, residues 203 to 271 (PESPRWLESR…LLKRVILGSC (69 aa)) are cytoplasmic. Residues 272-292 (VLIAMNVVQYTLINWLPTIFM) form a helical membrane-spanning segment. Over 293 to 301 (TQGINLKDS) the chain is Periplasmic. Residues 302–322 (IVLNTMSMFGAPFGIFIAMLV) traverse the membrane as a helical segment. The Cytoplasmic portion of the chain corresponds to 323–329 (MDKIPRK). The helical transmembrane segment at 330 to 350 (TMGVGLLILIAVLGYIYSLQT) threads the bilayer. Residue Ser351 is a topological domain, periplasmic. Residues 352 to 372 (MLLITLIGFFLITFVYMYVCY) traverse the membrane as a helical segment. At 373–399 (ASAVYVPEIWPTEAKLRGSGLANAVGR) the chain is on the cytoplasmic side. Helical transmembrane passes span 400–420 (ISGIAAPYAVAVLLSSYGVTG) and 421–441 (VFILLGAVSIIVAIAIATIGI). Over 442–459 (ETKGVSVESLSIDAVANK) the chain is Cytoplasmic.

Belongs to the major facilitator superfamily. Sugar transporter (TC 2.A.1.1) family.

It is found in the cell inner membrane. This Escherichia coli (strain K12) protein is Putative metabolite transport protein YdjK (ydjK).